Here is a 174-residue protein sequence, read N- to C-terminus: Endoribonuclease YbeY (174 aa).

Residues H129, H133, and H139 each coordinate Zn(2+).

This sequence belongs to the endoribonuclease YbeY family. Zn(2+) serves as cofactor.

The protein localises to the cytoplasm. In terms of biological role, single strand-specific metallo-endoribonuclease involved in late-stage 70S ribosome quality control and in maturation of the 3' terminus of the 16S rRNA. In Lactobacillus acidophilus (strain ATCC 700396 / NCK56 / N2 / NCFM), this protein is Endoribonuclease YbeY.